The following is an 888-amino-acid chain: E3 ubiquitin-protein ligase SH3RF1 (888 aa).

The RING-type zinc-finger motif lies at 12-53 (CPVCLERLDASAKVLPCQHTFCKRCLLGIVGSRNELRCPECR). 2 consecutive SH3 domains span residues 134–193 (PQLP…IIKP) and 196–259 (QPPP…FNSA). A disordered region spans residues 275-321 (DAGECSSAAAQSSTAPKHSDTKKNTKKRHSFTSLTMANKSSQASQNR). The tract at residues 292 to 362 (HSDTKKNTKK…APSQVHISTT (71 aa)) is interaction with RAC1. Ser304 carries the post-translational modification Phosphoserine. A compositionally biased stretch (polar residues) spans 305-321 (FTSLTMANKSSQASQNR). Residues 440 to 543 (HLRPQTRPSV…STAGGPAQKL (104 aa)) are interaction with AKT2. An SH3 3 domain is found at 445-506 (TRPSVYVAIY…PGNYVAPVTR (62 aa)). Disordered stretches follow at residues 516–549 (VPMS…NGVA), 617–637 (SPAS…APLM), and 693–741 (PDSA…ASPT). Positions 520-535 (TAGQTSRGVTMVSPST) are enriched in polar residues. Residue Ser532 is modified to Phosphoserine. Over residues 693-704 (PDSASLACGNSS) the composition is skewed to polar residues. Positions 707–718 (KPDKDSKKEKKG) are enriched in basic and acidic residues. The residue at position 735 (Ser735) is a Phosphoserine. The SH3 4 domain maps to 829–888 (VVCERHRVVVSYPPQSEAELELKEGDIVFVHKKREDGWFKGTLQRNGKTGLFPGSFVENI).

It belongs to the SH3RF family. In terms of assembly, interacts with HERP1. Interacts with RAC1; in a GTP-dependent manner. Interacts with MAP3K10/MLK2 and MAP3K11/MLK3. Interacts with MAPK8IP; this interaction leads to the PJAC complex (POSH-JIP or SH3RF1/MAPK8IP apoptotic complex) with a 1:1 ratio. Interacts with SIAH1. Probably part of a signaling complex that may contain SH3RF1, MAPK8IP, DLK1, MAP2K4/MKK4, MAP2K7/MKK7, MAPK8/JNK1, MAPK9/JNK2, AKT1 and AKT2. Found in a complex with RAC2, MAP3K7/TAK1, MAP2K7/MKK7, MAPK8IP1/JIP1, MAPK8/JNK1 and MAPK9/JNK2. Found in a complex with RAC1, MAP3K11/MLK3, MAP2K7/MKK7, MAPK8IP1/JIP1 and MAPK8/JNK1. Interacts with SH3RF2. Phosphorylated at Ser-304 by AKT1 and AKT2. When phosphorylated, it has reduced ability to bind Rac. Post-translationally, autoubiquitinated. Ubiquitinated by SH3RF2, leading to proteasome-mediated degradation.

It is found in the cytoplasm. The protein localises to the perinuclear region. It localises to the cell projection. The protein resides in the lamellipodium. Its subcellular location is the golgi apparatus. It is found in the trans-Golgi network. It catalyses the reaction S-ubiquitinyl-[E2 ubiquitin-conjugating enzyme]-L-cysteine + [acceptor protein]-L-lysine = [E2 ubiquitin-conjugating enzyme]-L-cysteine + N(6)-ubiquitinyl-[acceptor protein]-L-lysine.. It participates in protein modification; protein ubiquitination. Its function is as follows. Has E3 ubiquitin-protein ligase activity. In the absence of an external substrate, it can catalyze self-ubiquitination. Stimulates ubiquitination of potassium channel KCNJ1, enhancing it's dynamin-dependent and clathrin-independent endocytosis. Acts as a scaffold protein that coordinates with MAPK8IP1/JIP1 in organizing different components of the JNK pathway, including RAC1 or RAC2, MAP3K11/MLK3 or MAP3K7/TAK1, MAP2K7/MKK7, MAPK8/JNK1 and/or MAPK9/JNK2 into a functional multiprotein complex to ensure the effective activation of the JNK signaling pathway. Regulates the differentiation of CD4(+) and CD8(+) T-cells and promotes T-helper 1 (Th1) cell differentiation. Regulates the activation of MAPK8/JNK1 and MAPK9/JNK2 in CD4(+) T-cells and the activation of MAPK8/JNK1 in CD8(+) T-cells. Controls proper cortical neuronal migration and the formation of proximal cytoplasmic dilation in the leading process (PCDLP) in migratory neocortical neurons by regulating the proper localization of activated RAC1 and F-actin assembly. In Pongo abelii (Sumatran orangutan), this protein is E3 ubiquitin-protein ligase SH3RF1 (SH3RF1).